The primary structure comprises 434 residues: Tol-Pal system protein TolB (434 aa).

The first 24 residues, 1–24 (MKFSAYLTTLFIVLFSLFIQTVQA), serve as a signal peptide directing secretion.

The protein belongs to the TolB family. As to quaternary structure, the Tol-Pal system is composed of five core proteins: the inner membrane proteins TolA, TolQ and TolR, the periplasmic protein TolB and the outer membrane protein Pal. They form a network linking the inner and outer membranes and the peptidoglycan layer.

It is found in the periplasm. Functionally, part of the Tol-Pal system, which plays a role in outer membrane invagination during cell division and is important for maintaining outer membrane integrity. This is Tol-Pal system protein TolB from Histophilus somni (strain 129Pt) (Haemophilus somnus).